Consider the following 149-residue polypeptide: Arginine repressor (149 aa).

Belongs to the ArgR family.

The protein localises to the cytoplasm. The protein operates within amino-acid biosynthesis; L-arginine biosynthesis [regulation]. Its function is as follows. Regulates arginine biosynthesis genes. The chain is Arginine repressor from Chlorobaculum tepidum (strain ATCC 49652 / DSM 12025 / NBRC 103806 / TLS) (Chlorobium tepidum).